The primary structure comprises 283 residues: Isochorismatase domain-containing protein 1 (283 aa).

Belongs to the isochorismatase family.

This chain is Isochorismatase domain-containing protein 1 (isoc1), found in Salmo salar (Atlantic salmon).